The primary structure comprises 2371 residues: NBAS subunit of NRZ tethering complex (2371 aa).

An interaction with USE1 region spans residues 1–1035; sequence MAAPESGPAL…KTEATTKLHD (1035 aa). WD repeat units lie at residues 130 to 169 and 316 to 355; these read DPKPQWRRVAWSYDCTLLAYAESTGTVRVFDLMGSELFVI and QEQDGIFKMSLSPDGMLLAAIHFSGKLSIWAIPSLKQQGE. 2 positions are modified to phosphoserine: Ser-473 and Ser-475. The interaction with ZW10 and RINT1 stretch occupies residues 1036-2371; it reads MVDQLEQILS…TALRAAQHWV (1336 aa). The residue at position 1057 (Lys-1057) is an N6-acetyllysine.

As to quaternary structure, component of the NRZ complex composed of NBAS, ZW10 and RINT1/TIP20L; NRZ associates with SNAREs STX18, USE1, BNIP1/SEC20L and SEC22B (the assembly has been described as syntaxin 18 complex); links NRZ to SNARE USE1. In terms of tissue distribution, broadly expressed, with highest levels in heart and skeletal muscle, and lowest levels in liver, small intestine and thymus. Well expressed in retinal ganglion cells, epidermal skin cells, and leukocytes. Up-regulated together with N-myc in some neuroblastoma cell lines.

Its subcellular location is the cytoplasm. It is found in the endoplasmic reticulum. The protein resides in the endoplasmic reticulum membrane. Involved in Golgi-to-endoplasmic reticulum (ER) retrograde transport; the function is proposed to depend on its association in the NRZ complex which is believed to play a role in SNARE assembly at the ER. Required for normal embryonic development. May play a role in the nonsense-mediated decay pathway of mRNAs containing premature stop codons. This is NBAS subunit of NRZ tethering complex from Homo sapiens (Human).